A 145-amino-acid chain; its full sequence is Lysozyme C (145 aa).

The signal sequence occupies residues 1–19 (MLFFGFLLAFLSAVPGTEG). The region spanning 20–145 (EIIPRCELVK…RDLSSYVKGC (126 aa)) is the C-type lysozyme domain. 4 disulfide bridges follow: Cys-25/Cys-145, Cys-49/Cys-133, Cys-82/Cys-98, and Cys-94/Cys-112. Catalysis depends on residues Glu-54 and Asp-70.

This sequence belongs to the glycosyl hydrolase 22 family. In terms of assembly, monomer.

It localises to the secreted. It carries out the reaction Hydrolysis of (1-&gt;4)-beta-linkages between N-acetylmuramic acid and N-acetyl-D-glucosamine residues in a peptidoglycan and between N-acetyl-D-glucosamine residues in chitodextrins.. Its function is as follows. Lysozymes have primarily a bacteriolytic function; those in tissues and body fluids are associated with the monocyte-macrophage system and enhance the activity of immunoagents. The protein is Lysozyme C (LYZ) of Opisthocomus hoazin (Hoatzin).